A 64-amino-acid polypeptide reads, in one-letter code: Large ribosomal subunit protein bL28C (64 aa).

The protein belongs to the bacterial ribosomal protein bL28 family.

The sequence is that of Large ribosomal subunit protein bL28C from Mycobacterium tuberculosis (strain ATCC 25618 / H37Rv).